We begin with the raw amino-acid sequence, 286 residues long: 4-hydroxybenzoate octaprenyltransferase (286 aa).

8 helical membrane passes run 20–40 (IGTL…AQGL), 43–63 (IKVL…GCII), 96–116 (LFTL…PLVV), 142–162 (FLGI…LGEV), 167–187 (WWLF…YAIV), 210–230 (QIIG…GLVA), 235–255 (IYGL…RLIF), and 266–286 (FLNN…DYMI).

This sequence belongs to the UbiA prenyltransferase family. Mg(2+) is required as a cofactor.

It is found in the cell inner membrane. The catalysed reaction is all-trans-octaprenyl diphosphate + 4-hydroxybenzoate = 4-hydroxy-3-(all-trans-octaprenyl)benzoate + diphosphate. It participates in cofactor biosynthesis; ubiquinone biosynthesis. In terms of biological role, catalyzes the prenylation of para-hydroxybenzoate (PHB) with an all-trans polyprenyl group. Mediates the second step in the final reaction sequence of ubiquinone-8 (UQ-8) biosynthesis, which is the condensation of the polyisoprenoid side chain with PHB, generating the first membrane-bound Q intermediate 3-octaprenyl-4-hydroxybenzoate. In Shewanella frigidimarina (strain NCIMB 400), this protein is 4-hydroxybenzoate octaprenyltransferase.